Consider the following 363-residue polypeptide: NAD(P)H-quinone oxidoreductase subunit 1, chloroplastic (363 aa).

A run of 8 helical transmembrane segments spans residues 30 to 50, 98 to 118, 127 to 147, 165 to 185, 203 to 223, 248 to 268, 300 to 320, and 336 to 356; these read LVPI…IVWL, FSIG…VIPF, LSIG…GLLM, AAQS…ISLL, FWGW…ISSL, YSGI…LVSS, VFGT…FLFI, and LLNL…LLTT.

It belongs to the complex I subunit 1 family. NDH is composed of at least 16 different subunits, 5 of which are encoded in the nucleus.

The protein localises to the plastid. It localises to the chloroplast thylakoid membrane. It carries out the reaction a plastoquinone + NADH + (n+1) H(+)(in) = a plastoquinol + NAD(+) + n H(+)(out). The enzyme catalyses a plastoquinone + NADPH + (n+1) H(+)(in) = a plastoquinol + NADP(+) + n H(+)(out). NDH shuttles electrons from NAD(P)H:plastoquinone, via FMN and iron-sulfur (Fe-S) centers, to quinones in the photosynthetic chain and possibly in a chloroplast respiratory chain. The immediate electron acceptor for the enzyme in this species is believed to be plastoquinone. Couples the redox reaction to proton translocation, and thus conserves the redox energy in a proton gradient. In Solanum lycopersicum (Tomato), this protein is NAD(P)H-quinone oxidoreductase subunit 1, chloroplastic.